The sequence spans 278 residues: Sulfur carrier protein FdhD (278 aa).

Residue cysteine 124 is the Cysteine persulfide intermediate of the active site.

This sequence belongs to the FdhD family.

The protein localises to the cytoplasm. Functionally, required for formate dehydrogenase (FDH) activity. Acts as a sulfur carrier protein that transfers sulfur from IscS to the molybdenum cofactor prior to its insertion into FDH. This chain is Sulfur carrier protein FdhD, found in Burkholderia cenocepacia (strain ATCC BAA-245 / DSM 16553 / LMG 16656 / NCTC 13227 / J2315 / CF5610) (Burkholderia cepacia (strain J2315)).